Reading from the N-terminus, the 136-residue chain is Nucleoside diphosphate kinase (136 aa).

Residues Lys10, Phe58, Arg86, Thr92, Arg104, and Asn114 each coordinate ATP. His117 serves as the catalytic Pros-phosphohistidine intermediate.

This sequence belongs to the NDK family. In terms of assembly, homotetramer. It depends on Mg(2+) as a cofactor.

Its subcellular location is the cytoplasm. The catalysed reaction is a 2'-deoxyribonucleoside 5'-diphosphate + ATP = a 2'-deoxyribonucleoside 5'-triphosphate + ADP. It catalyses the reaction a ribonucleoside 5'-diphosphate + ATP = a ribonucleoside 5'-triphosphate + ADP. Functionally, major role in the synthesis of nucleoside triphosphates other than ATP. The ATP gamma phosphate is transferred to the NDP beta phosphate via a ping-pong mechanism, using a phosphorylated active-site intermediate. The polypeptide is Nucleoside diphosphate kinase (Mycolicibacterium vanbaalenii (strain DSM 7251 / JCM 13017 / BCRC 16820 / KCTC 9966 / NRRL B-24157 / PYR-1) (Mycobacterium vanbaalenii)).